The chain runs to 261 residues: Undecaprenyl-diphosphatase (261 aa).

A run of 8 helical transmembrane segments spans residues 1–21 (MNYI…FLPV), 41–61 (FTKL…VVLY), 69–89 (LDFY…GLLF), 95–115 (ALLE…IILL), 129–149 (ITYL…IPGV), 169–186 (AAEF…GATL), 206–226 (ILII…KTFI), and 241–261 (RIVA…LTLI).

It belongs to the UppP family.

Its subcellular location is the cell inner membrane. It catalyses the reaction di-trans,octa-cis-undecaprenyl diphosphate + H2O = di-trans,octa-cis-undecaprenyl phosphate + phosphate + H(+). Its function is as follows. Catalyzes the dephosphorylation of undecaprenyl diphosphate (UPP). Confers resistance to bacitracin. This chain is Undecaprenyl-diphosphatase, found in Flavobacterium psychrophilum (strain ATCC 49511 / DSM 21280 / CIP 103535 / JIP02/86).